Consider the following 161-residue polypeptide: Small ribosomal subunit protein uS19 (161 aa).

Residues 1 to 19 (MARQKKYSGKGGARKKNKQ) are compositionally biased toward basic residues. The interval 1–26 (MARQKKYSGKGGARKKNKQKQNVAPR) is disordered.

Belongs to the universal ribosomal protein uS19 family.

In terms of biological role, protein S19 forms a complex with S13 that binds strongly to the 16S ribosomal RNA. The polypeptide is Small ribosomal subunit protein uS19 (Methanococcus maripaludis (strain DSM 14266 / JCM 13030 / NBRC 101832 / S2 / LL)).